A 206-amino-acid polypeptide reads, in one-letter code: Nucleoside triphosphate pyrophosphatase (206 aa).

The Proton acceptor role is filled by Asp-78.

The protein belongs to the Maf family. Requires a divalent metal cation as cofactor.

Its subcellular location is the cytoplasm. It catalyses the reaction a ribonucleoside 5'-triphosphate + H2O = a ribonucleoside 5'-phosphate + diphosphate + H(+). The enzyme catalyses a 2'-deoxyribonucleoside 5'-triphosphate + H2O = a 2'-deoxyribonucleoside 5'-phosphate + diphosphate + H(+). In terms of biological role, nucleoside triphosphate pyrophosphatase. May have a dual role in cell division arrest and in preventing the incorporation of modified nucleotides into cellular nucleic acids. The chain is Nucleoside triphosphate pyrophosphatase from Prochlorococcus marinus (strain MIT 9312).